The primary structure comprises 130 residues: Histone H2A type 1-K (130 aa).

The interval 1–22 is disordered; sequence MSGRGKQGGKARAKAKTRSSRA. At S2 the chain carries N-acetylserine. S2 carries the post-translational modification Phosphoserine; by RPS6KA5. The residue at position 4 (R4) is a Citrulline; alternate. Position 4 is a symmetric dimethylarginine; by PRMT5; alternate (R4). Residues K6 and K10 each carry the N6-(2-hydroxyisobutyryl)lysine; alternate modification. Residue K6 is modified to N6-(beta-hydroxybutyryl)lysine; alternate. Residues K6 and K10 each carry the N6-acetyllysine; alternate modification. The segment covering 7–19 has biased composition (basic residues); the sequence is QGGKARAKAKTRS. Position 10 is an N6-lactoyllysine; alternate (K10). Residue K10 is modified to N6-succinyllysine; alternate. Residues K14 and K16 each participate in a glycyl lysine isopeptide (Lys-Gly) (interchain with G-Cter in ubiquitin) cross-link. K37 carries the post-translational modification N6-(2-hydroxyisobutyryl)lysine; alternate. N6-(beta-hydroxybutyryl)lysine; alternate is present on K37. K37 is subject to N6-crotonyllysine; alternate. An N6-(2-hydroxyisobutyryl)lysine mark is found at K75 and K76. Residue K96 is modified to N6-(2-hydroxyisobutyryl)lysine; alternate. Residue K96 is modified to N6-succinyllysine; alternate. K96 is subject to N6-glutaryllysine; alternate. Q105 is subject to N5-methylglutamine. Position 119 is an N6-(2-hydroxyisobutyryl)lysine; alternate (K119). 2 positions are modified to N6-crotonyllysine; alternate: K119 and K120. N6-glutaryllysine; alternate occurs at positions 119 and 120. Residue K120 is modified to N6-(beta-hydroxybutyryl)lysine; alternate. K120 participates in a covalent cross-link: Glycyl lysine isopeptide (Lys-Gly) (interchain with G-Cter in ubiquitin); alternate. T121 is subject to Phosphothreonine; by DCAF1. K126 carries the post-translational modification N6-(beta-hydroxybutyryl)lysine; alternate. K126 bears the N6-crotonyllysine; alternate mark. N6-glutaryllysine; alternate is present on K126.

Belongs to the histone H2A family. In terms of assembly, the nucleosome is a histone octamer containing two molecules each of H2A, H2B, H3 and H4 assembled in one H3-H4 heterotetramer and two H2A-H2B heterodimers. The octamer wraps approximately 147 bp of DNA. Post-translationally, deiminated on Arg-4 in granulocytes upon calcium entry. In terms of processing, monoubiquitination of Lys-120 (H2AK119Ub) by RING1, TRIM37 and RNF2/RING2 complex gives a specific tag for epigenetic transcriptional repression and participates in X chromosome inactivation of female mammals. It is involved in the initiation of both imprinted and random X inactivation. Ubiquitinated H2A is enriched in inactive X chromosome chromatin. Ubiquitination of H2A functions downstream of methylation of 'Lys-27' of histone H3 (H3K27me). H2AK119Ub by RNF2/RING2 can also be induced by ultraviolet and may be involved in DNA repair. Following DNA double-strand breaks (DSBs), it is ubiquitinated through 'Lys-63' linkage of ubiquitin moieties by the E2 ligase UBE2N and the E3 ligases RNF8 and RNF168, leading to the recruitment of repair proteins to sites of DNA damage. Ubiquitination at Lys-14 and Lys-16 (H2AK13Ub and H2AK15Ub, respectively) in response to DNA damage is initiated by RNF168 that mediates monoubiquitination at these 2 sites, and 'Lys-63'-linked ubiquitin are then conjugated to monoubiquitin; RNF8 is able to extend 'Lys-63'-linked ubiquitin chains in vitro. Deubiquitinated by USP51 at Lys-14 and Lys-16 (H2AK13Ub and H2AK15Ub, respectively) after damaged DNA is repaired. H2AK119Ub and ionizing radiation-induced 'Lys-63'-linked ubiquitination (H2AK13Ub and H2AK15Ub) are distinct events. Phosphorylation on Ser-2 (H2AS1ph) is enhanced during mitosis. Phosphorylation on Ser-2 by RPS6KA5/MSK1 directly represses transcription. Acetylation of H3 inhibits Ser-2 phosphorylation by RPS6KA5/MSK1. Phosphorylation at Thr-121 (H2AT120ph) by DCAF1 is present in the regulatory region of many tumor suppresor genes and down-regulates their transcription. Post-translationally, symmetric dimethylation on Arg-4 by the PRDM1/PRMT5 complex may play a crucial role in the germ-cell lineage. In terms of processing, glutamine methylation at Gln-105 (H2AQ104me) by FBL is specifically dedicated to polymerase I. It is present at 35S ribosomal DNA locus and impairs binding of the FACT complex. Crotonylation (Kcr) is specifically present in male germ cells and marks testis-specific genes in post-meiotic cells, including X-linked genes that escape sex chromosome inactivation in haploid cells. Crotonylation marks active promoters and enhancers and confers resistance to transcriptional repressors. It is also associated with post-meiotically activated genes on autosomes. Post-translationally, hydroxybutyrylation of histones is induced by starvation. In terms of processing, lactylated in macrophages by EP300/P300 by using lactoyl-CoA directly derived from endogenous or exogenous lactate, leading to stimulates gene transcription.

The protein resides in the nucleus. Its subcellular location is the chromosome. Its function is as follows. Core component of nucleosome. Nucleosomes wrap and compact DNA into chromatin, limiting DNA accessibility to the cellular machineries which require DNA as a template. Histones thereby play a central role in transcription regulation, DNA repair, DNA replication and chromosomal stability. DNA accessibility is regulated via a complex set of post-translational modifications of histones, also called histone code, and nucleosome remodeling. In Mus musculus (Mouse), this protein is Histone H2A type 1-K.